Reading from the N-terminus, the 414-residue chain is tRNA (guanine-N(7)-)-methyltransferase non-catalytic subunit WDR4 (414 aa).

Residue Ala2 is modified to N-acetylalanine. WD repeat units follow at residues 60-99, 101-140, 144-184, and 187-227; these read QGSDTVLASTFSKSGSYFVLTDDSKRLILFRTNPWQCLSV, TVVRRCTALTFTASEEKILVADKSGDVYSFSVLEPHGGGR, GHLS…IESF, and GHTE…ELHC. Residues 377-414 are disordered; the sequence is EERLQQQLEKKRRQAPPPGPNGPTKKMRAGELAQGCSS.

Belongs to the WD repeat TRM82 family. In terms of assembly, non-catalytic component of the METTL1-WDR4 complex, composed of METTL1 and WDR4. Interacts with FEN1; the interaction is direct.

It localises to the nucleus. Its subcellular location is the chromosome. Its pathway is tRNA modification; N(7)-methylguanine-tRNA biosynthesis. Functionally, non-catalytic component of the METTL1-WDR4 methyltransferase complex required for the formation of N(7)-methylguanine in a subset of RNA species, such as tRNAs, mRNAs and microRNAs (miRNAs). In the METTL1-WDR4 methyltransferase complex, WDR4 acts as a scaffold for tRNA-binding. Required for the formation of N(7)-methylguanine at position 46 (m7G46) in a large subset of tRNAs that contain the 5'-RAGGU-3' motif within the variable loop. M7G46 interacts with C13-G22 in the D-loop to stabilize tRNA tertiary structure and protect tRNAs from decay. Also required for the formation of N(7)-methylguanine at internal sites in a subset of mRNAs. Also required for methylation of a specific subset of miRNAs, such as let-7. Independently of METTL1, also plays a role in genome stability: localizes at the DNA replication site and regulates endonucleolytic activities of FEN1. This is tRNA (guanine-N(7)-)-methyltransferase non-catalytic subunit WDR4 from Bos taurus (Bovine).